The sequence spans 256 residues: Alcohol dehydrogenase (256 aa).

Phe12–Leu35 contributes to the NAD(+) binding site. Ser140 contacts substrate. Tyr153 serves as the catalytic Proton acceptor.

It belongs to the short-chain dehydrogenases/reductases (SDR) family. As to quaternary structure, homodimer.

The catalysed reaction is a primary alcohol + NAD(+) = an aldehyde + NADH + H(+). It catalyses the reaction a secondary alcohol + NAD(+) = a ketone + NADH + H(+). The polypeptide is Alcohol dehydrogenase (Adh) (Drosophila sechellia (Fruit fly)).